We begin with the raw amino-acid sequence, 223 residues long: Putative C-type lectin protein 51 (223 aa).

Residues 1–31 (MAKRINFTSCLIFTSCFTAFIVSLCLLVSSC) form the signal peptide. The C-type lectin domain occupies 111 to 218 (QEGRCYHYSR…CDTPRRCLCG (108 aa)). Cysteine 193 and cysteine 209 are oxidised to a cystine.

The sequence is that of Putative C-type lectin protein 51 (51) from Equine herpesvirus 2 (strain 86/87) (EHV-2).